The chain runs to 698 residues: DNA ligase (698 aa).

NAD(+)-binding positions include 47–51, 96–97, and glutamate 128; these read DAQYD and SL. The active-site N6-AMP-lysine intermediate is the lysine 130. Positions 151, 186, 303, and 327 each coordinate NAD(+). Zn(2+) is bound by residues cysteine 422, cysteine 425, cysteine 440, and cysteine 446. The region spanning 620-698 is the BRCT domain; that stretch reads GDNLLLSNQT…EEEWIKMVNE (79 aa).

It belongs to the NAD-dependent DNA ligase family. LigA subfamily. It depends on Mg(2+) as a cofactor. Mn(2+) serves as cofactor.

The catalysed reaction is NAD(+) + (deoxyribonucleotide)n-3'-hydroxyl + 5'-phospho-(deoxyribonucleotide)m = (deoxyribonucleotide)n+m + AMP + beta-nicotinamide D-nucleotide.. Functionally, DNA ligase that catalyzes the formation of phosphodiester linkages between 5'-phosphoryl and 3'-hydroxyl groups in double-stranded DNA using NAD as a coenzyme and as the energy source for the reaction. It is essential for DNA replication and repair of damaged DNA. This chain is DNA ligase, found in Orientia tsutsugamushi (strain Boryong) (Rickettsia tsutsugamushi).